The primary structure comprises 168 residues: Large ribosomal subunit protein uL5 (168 aa).

The protein belongs to the universal ribosomal protein uL5 family. Part of the 50S ribosomal subunit; contacts the 5S rRNA and probably tRNA. Forms a bridge to the 30S subunit in the 70S ribosome.

This is one of the proteins that bind and probably mediate the attachment of the 5S RNA into the large ribosomal subunit, where it forms part of the central protuberance. In the 70S ribosome it contacts protein S13 of the 30S subunit (bridge B1b), connecting the 2 subunits; this bridge is implicated in subunit movement. May contact the P site tRNA; the 5S rRNA and some of its associated proteins might help stabilize positioning of ribosome-bound tRNAs. The polypeptide is Large ribosomal subunit protein uL5 (Methanosphaera stadtmanae (strain ATCC 43021 / DSM 3091 / JCM 11832 / MCB-3)).